The primary structure comprises 394 residues: tRNA-specific 2-thiouridylase MnmA (394 aa).

ATP-binding positions include 30–37 (AMSGGVDS) and L56. C124 functions as the Nucleophile in the catalytic mechanism. C124 and C220 form a disulfide bridge. An ATP-binding site is contributed by G148. An interaction with tRNA region spans residues 170 to 172 (RDQ). C220 acts as the Cysteine persulfide intermediate in catalysis.

It belongs to the MnmA/TRMU family.

It localises to the cytoplasm. It carries out the reaction S-sulfanyl-L-cysteinyl-[protein] + uridine(34) in tRNA + AH2 + ATP = 2-thiouridine(34) in tRNA + L-cysteinyl-[protein] + A + AMP + diphosphate + H(+). In terms of biological role, catalyzes the 2-thiolation of uridine at the wobble position (U34) of tRNA, leading to the formation of s(2)U34. This Hyphomonas neptunium (strain ATCC 15444) protein is tRNA-specific 2-thiouridylase MnmA.